Here is an 82-residue protein sequence, read N- to C-terminus: Large ribosomal subunit protein bL31B (82 aa).

This sequence belongs to the bacterial ribosomal protein bL31 family. Type B subfamily. In terms of assembly, part of the 50S ribosomal subunit.

The chain is Large ribosomal subunit protein bL31B from Pectobacterium carotovorum subsp. carotovorum (strain PC1).